Reading from the N-terminus, the 484-residue chain is 6-phosphogluconate dehydrogenase, decarboxylating (484 aa).

NADP(+) is bound by residues 10-15, 33-35, 75-77, and N103; these read GLAVMG, NRT, and IKA. Substrate is bound by residues N103 and 129–131; that span reads SGG. K183 serves as the catalytic Proton acceptor. 186-187 serves as a coordination point for substrate; it reads HN. Residue E190 is the Proton donor of the active site. Positions 191, 260, 287, 448, and 454 each coordinate substrate.

This sequence belongs to the 6-phosphogluconate dehydrogenase family. In terms of assembly, homodimer.

The enzyme catalyses 6-phospho-D-gluconate + NADP(+) = D-ribulose 5-phosphate + CO2 + NADPH. It participates in carbohydrate degradation; pentose phosphate pathway; D-ribulose 5-phosphate from D-glucose 6-phosphate (oxidative stage): step 3/3. Functionally, catalyzes the oxidative decarboxylation of 6-phosphogluconate to ribulose 5-phosphate and CO(2), with concomitant reduction of NADP to NADPH. This is 6-phosphogluconate dehydrogenase, decarboxylating from Caenorhabditis elegans.